The sequence spans 651 residues: LEAF RUST 10 DISEASE-RESISTANCE LOCUS RECEPTOR-LIKE PROTEIN KINASE-like 1.2 (651 aa).

The first 26 residues, 1 to 26 (MNPSTPSLLYTSIFFYFTIIATQTLS), serve as a signal peptide directing secretion. The Extracellular portion of the chain corresponds to 27 to 264 (LDPKFKACEP…NDKRRRVIVK (238 aa)). N-linked (GlcNAc...) asparagine glycosylation is found at N88, N114, N130, N136, N155, N193, and N213. Residues 265–285 (VLIGASAAVVGLIAASIFWYV) traverse the membrane as a helical segment. At 286-651 (YHRRKTKSYR…DSVIVKWDSK (366 aa)) the chain is on the cytoplasmic side. The 273-residue stretch at 341 to 613 (FDPSKELGDG…PCMSHVQDTL (273 aa)) folds into the Protein kinase domain. Residues 347–355 (LGDGGFGTV) and K369 each bind ATP. Y415 carries the phosphotyrosine modification. D465 functions as the Proton acceptor in the catalytic mechanism. Phosphoserine is present on S498. Residues T499 and T504 each carry the phosphothreonine modification. Y512 is modified (phosphotyrosine).

This sequence belongs to the protein kinase superfamily. Ser/Thr protein kinase family.

It localises to the cell membrane. The protein resides in the membrane. The catalysed reaction is L-seryl-[protein] + ATP = O-phospho-L-seryl-[protein] + ADP + H(+). It carries out the reaction L-threonyl-[protein] + ATP = O-phospho-L-threonyl-[protein] + ADP + H(+). Functionally, probable receptor-like serine/threonine-protein kinase involved in abscisic acid (ABA) signaling. Acts as a positive regulator of abiotic stress response. The sequence is that of LEAF RUST 10 DISEASE-RESISTANCE LOCUS RECEPTOR-LIKE PROTEIN KINASE-like 1.2 from Arabidopsis thaliana (Mouse-ear cress).